Reading from the N-terminus, the 405-residue chain is 2,3-diketo-5-methylthiopentyl-1-phosphate enolase (405 aa).

Residue lysine 91 is the Proton acceptor of the active site. Substrate-binding positions include lysine 140, 166–169, histidine 257, glycine 329, and 351–352; these read KDDE and GG. Mg(2+) contacts are provided by lysine 166, aspartate 168, and glutamate 169. The residue at position 166 (lysine 166) is an N6-carboxylysine.

Belongs to the RuBisCO large chain family. Type IV subfamily. As to quaternary structure, homodimer. The cofactor is Mg(2+).

It catalyses the reaction 5-methylsulfanyl-2,3-dioxopentyl phosphate = 2-hydroxy-5-methylsulfanyl-3-oxopent-1-enyl phosphate. It functions in the pathway amino-acid biosynthesis; L-methionine biosynthesis via salvage pathway; L-methionine from S-methyl-5-thio-alpha-D-ribose 1-phosphate: step 3/6. In terms of biological role, catalyzes the enolization of 2,3-diketo-5-methylthiopentyl-1-phosphate (DK-MTP-1-P) into 2-hydroxy-3-keto-5-methylthiopentenyl-1-phosphate (HK-MTPenyl-1-P). The chain is 2,3-diketo-5-methylthiopentyl-1-phosphate enolase from Bacillus licheniformis (strain ATCC 14580 / DSM 13 / JCM 2505 / CCUG 7422 / NBRC 12200 / NCIMB 9375 / NCTC 10341 / NRRL NRS-1264 / Gibson 46).